The chain runs to 197 residues: Potassium-transporting ATPase KdpC subunit (197 aa).

Residues 9 to 29 (LVVTLLLAALLCGAYPVLVTG) traverse the membrane as a helical segment.

Belongs to the KdpC family. In terms of assembly, the system is composed of three essential subunits: KdpA, KdpB and KdpC.

The protein resides in the cell inner membrane. Functionally, part of the high-affinity ATP-driven potassium transport (or Kdp) system, which catalyzes the hydrolysis of ATP coupled with the electrogenic transport of potassium into the cytoplasm. This subunit acts as a catalytic chaperone that increases the ATP-binding affinity of the ATP-hydrolyzing subunit KdpB by the formation of a transient KdpB/KdpC/ATP ternary complex. This Nitratidesulfovibrio vulgaris (strain DSM 19637 / Miyazaki F) (Desulfovibrio vulgaris) protein is Potassium-transporting ATPase KdpC subunit.